Consider the following 425-residue polypeptide: Formyl-CoA:oxalate CoA-transferase (425 aa).

Residues 17–18 (QS), Arg38, 72–75 (LDTK), 96–98 (NFG), Arg104, and 136–139 (KVYE) contribute to the CoA site. Asp168 functions as the Nucleophile in the catalytic mechanism. 247-249 (GGQ) is a binding site for substrate.

This sequence belongs to the CoA-transferase III family. Frc subfamily. Homodimer.

It carries out the reaction formyl-CoA + oxalate = oxalyl-CoA + formate. It functions in the pathway metabolic intermediate degradation; oxalate degradation; CO(2) and formate from oxalate: step 1/2. Involved in the catabolism of oxalate and in the adapatation to low pH via the induction of the oxalate-dependent acid tolerance response (ATR). Catalyzes the transfer of the CoA moiety from formyl-CoA to oxalate. In Rhodopseudomonas palustris (strain TIE-1), this protein is Formyl-CoA:oxalate CoA-transferase.